A 338-amino-acid polypeptide reads, in one-letter code: Glycerol-3-phosphate dehydrogenase [NAD(P)+] (338 aa).

3 residues coordinate NADPH: Ser-13, Trp-14, and Lys-108. Lys-108, Gly-139, and Ser-141 together coordinate sn-glycerol 3-phosphate. Ala-143 provides a ligand contact to NADPH. Sn-glycerol 3-phosphate contacts are provided by Lys-194, Asp-247, Ser-257, Arg-258, and Asn-259. Lys-194 acts as the Proton acceptor in catalysis. Arg-258 is a binding site for NADPH. NADPH-binding residues include Val-282 and Glu-284.

Belongs to the NAD-dependent glycerol-3-phosphate dehydrogenase family.

Its subcellular location is the cytoplasm. The catalysed reaction is sn-glycerol 3-phosphate + NAD(+) = dihydroxyacetone phosphate + NADH + H(+). It carries out the reaction sn-glycerol 3-phosphate + NADP(+) = dihydroxyacetone phosphate + NADPH + H(+). Its pathway is membrane lipid metabolism; glycerophospholipid metabolism. In terms of biological role, catalyzes the reduction of the glycolytic intermediate dihydroxyacetone phosphate (DHAP) to sn-glycerol 3-phosphate (G3P), the key precursor for phospholipid synthesis. This chain is Glycerol-3-phosphate dehydrogenase [NAD(P)+], found in Streptococcus pyogenes serotype M28 (strain MGAS6180).